A 193-amino-acid chain; its full sequence is Thymidine kinase (193 aa).

Residues 9 to 16 (STMNAGKS) and 87 to 90 (DEAN) contribute to the ATP site. Glutamate 88 serves as the catalytic Proton acceptor. Residues cysteine 145, cysteine 147, cysteine 182, and histidine 185 each contribute to the Zn(2+) site.

Belongs to the thymidine kinase family. In terms of assembly, homotetramer.

It localises to the cytoplasm. It catalyses the reaction thymidine + ATP = dTMP + ADP + H(+). In Agrobacterium fabrum (strain C58 / ATCC 33970) (Agrobacterium tumefaciens (strain C58)), this protein is Thymidine kinase.